A 205-amino-acid chain; its full sequence is Phosphoheptose isomerase (205 aa).

Residues 38–200 (LAVRLALGSK…LFEAVGELEP (163 aa)) form the SIS domain. Substrate is bound at residue 53-55 (NGG). Positions 62 and 66 each coordinate Zn(2+). Substrate-binding positions include Glu-66, 95-96 (ND), 121-123 (STS), Ser-126, and Gln-173. The Zn(2+) site is built by Gln-173 and His-181.

Belongs to the SIS family. GmhA subfamily. As to quaternary structure, homotetramer. The cofactor is Zn(2+).

The protein localises to the cytoplasm. The enzyme catalyses 2 D-sedoheptulose 7-phosphate = D-glycero-alpha-D-manno-heptose 7-phosphate + D-glycero-beta-D-manno-heptose 7-phosphate. It functions in the pathway carbohydrate biosynthesis; D-glycero-D-manno-heptose 7-phosphate biosynthesis; D-glycero-alpha-D-manno-heptose 7-phosphate and D-glycero-beta-D-manno-heptose 7-phosphate from sedoheptulose 7-phosphate: step 1/1. Its function is as follows. Catalyzes the isomerization of sedoheptulose 7-phosphate in D-glycero-D-manno-heptose 7-phosphate. The chain is Phosphoheptose isomerase from Maridesulfovibrio salexigens (strain ATCC 14822 / DSM 2638 / NCIMB 8403 / VKM B-1763) (Desulfovibrio salexigens).